A 159-amino-acid chain; its full sequence is Ribosome maturation factor RimP (159 aa).

It belongs to the RimP family.

The protein localises to the cytoplasm. Required for maturation of 30S ribosomal subunits. This is Ribosome maturation factor RimP from Lacticaseibacillus casei (strain BL23) (Lactobacillus casei).